A 266-amino-acid chain; its full sequence is Thiazole synthase (266 aa).

The Schiff-base intermediate with DXP role is filled by Lys107. Residues Gly168, 194–195 (AG), and 216–217 (NT) contribute to the 1-deoxy-D-xylulose 5-phosphate site.

The protein belongs to the ThiG family. In terms of assembly, homotetramer. Forms heterodimers with either ThiH or ThiS.

The protein localises to the cytoplasm. The enzyme catalyses [ThiS sulfur-carrier protein]-C-terminal-Gly-aminoethanethioate + 2-iminoacetate + 1-deoxy-D-xylulose 5-phosphate = [ThiS sulfur-carrier protein]-C-terminal Gly-Gly + 2-[(2R,5Z)-2-carboxy-4-methylthiazol-5(2H)-ylidene]ethyl phosphate + 2 H2O + H(+). Its pathway is cofactor biosynthesis; thiamine diphosphate biosynthesis. Functionally, catalyzes the rearrangement of 1-deoxy-D-xylulose 5-phosphate (DXP) to produce the thiazole phosphate moiety of thiamine. Sulfur is provided by the thiocarboxylate moiety of the carrier protein ThiS. In vitro, sulfur can be provided by H(2)S. This chain is Thiazole synthase, found in Azorhizobium caulinodans (strain ATCC 43989 / DSM 5975 / JCM 20966 / LMG 6465 / NBRC 14845 / NCIMB 13405 / ORS 571).